Reading from the N-terminus, the 612-residue chain is Sorting nexin MVP1 (612 aa).

Positions 35–68 (SSAPSPAGSVTPARATASASEGRNIAANGNKEEG) are disordered. Residues 226 to 334 (WKDQERIVVT…NIFLTSSSFE (109 aa)) form the PX domain. A 1,2-diacyl-sn-glycero-3-phospho-(1D-myo-inositol-3-phosphate) is bound by residues arginine 263, serine 265, lysine 289, and arginine 301.

Belongs to the sorting nexin family.

The protein localises to the cytoplasm. It localises to the membrane. Its function is as follows. Required for vacuolar protein sorting. The protein is Sorting nexin MVP1 (MVP1) of Cryptococcus neoformans var. neoformans serotype D (strain B-3501A) (Filobasidiella neoformans).